The sequence spans 151 residues: Small ribosomal subunit protein bS6 (151 aa).

Residues 98–151 (EESPIQKAEKENRERKNRAERRAAEAAAATETEKSESEESAEEETSTDTTGEEE) are disordered. Residues 135 to 151 (EESAEEETSTDTTGEEE) show a composition bias toward acidic residues.

This sequence belongs to the bacterial ribosomal protein bS6 family.

In terms of biological role, binds together with bS18 to 16S ribosomal RNA. The sequence is that of Small ribosomal subunit protein bS6 from Teredinibacter turnerae (strain ATCC 39867 / T7901).